The primary structure comprises 292 residues: Phosphatidylserine decarboxylase proenzyme (292 aa).

Catalysis depends on charge relay system; for autoendoproteolytic cleavage activity residues aspartate 89, histidine 146, and serine 252. Residue serine 252 is the Schiff-base intermediate with substrate; via pyruvic acid; for decarboxylase activity of the active site. Serine 252 carries the post-translational modification Pyruvic acid (Ser); by autocatalysis.

The protein belongs to the phosphatidylserine decarboxylase family. PSD-B subfamily. Prokaryotic type I sub-subfamily. As to quaternary structure, heterodimer of a large membrane-associated beta subunit and a small pyruvoyl-containing alpha subunit. Requires pyruvate as cofactor. Is synthesized initially as an inactive proenzyme. Formation of the active enzyme involves a self-maturation process in which the active site pyruvoyl group is generated from an internal serine residue via an autocatalytic post-translational modification. Two non-identical subunits are generated from the proenzyme in this reaction, and the pyruvate is formed at the N-terminus of the alpha chain, which is derived from the carboxyl end of the proenzyme. The autoendoproteolytic cleavage occurs by a canonical serine protease mechanism, in which the side chain hydroxyl group of the serine supplies its oxygen atom to form the C-terminus of the beta chain, while the remainder of the serine residue undergoes an oxidative deamination to produce ammonia and the pyruvoyl prosthetic group on the alpha chain. During this reaction, the Ser that is part of the protease active site of the proenzyme becomes the pyruvoyl prosthetic group, which constitutes an essential element of the active site of the mature decarboxylase.

It localises to the cell membrane. The enzyme catalyses a 1,2-diacyl-sn-glycero-3-phospho-L-serine + H(+) = a 1,2-diacyl-sn-glycero-3-phosphoethanolamine + CO2. The protein operates within phospholipid metabolism; phosphatidylethanolamine biosynthesis; phosphatidylethanolamine from CDP-diacylglycerol: step 2/2. Its function is as follows. Catalyzes the formation of phosphatidylethanolamine (PtdEtn) from phosphatidylserine (PtdSer). In Shewanella baltica (strain OS223), this protein is Phosphatidylserine decarboxylase proenzyme.